A 139-amino-acid chain; its full sequence is Holo-[acyl-carrier-protein] synthase (139 aa).

Mg(2+) contacts are provided by Asp-8 and Glu-61.

The protein belongs to the P-Pant transferase superfamily. AcpS family. It depends on Mg(2+) as a cofactor.

Its subcellular location is the cytoplasm. It carries out the reaction apo-[ACP] + CoA = holo-[ACP] + adenosine 3',5'-bisphosphate + H(+). Functionally, transfers the 4'-phosphopantetheine moiety from coenzyme A to a Ser of acyl-carrier-protein. In Nitrobacter winogradskyi (strain ATCC 25391 / DSM 10237 / CIP 104748 / NCIMB 11846 / Nb-255), this protein is Holo-[acyl-carrier-protein] synthase.